The sequence spans 263 residues: Phosphatidylglycerol--prolipoprotein diacylglyceryl transferase (263 aa).

The next 4 helical transmembrane spans lie at 15-35, 52-72, 83-103, and 112-132; these read ISIH…VYLA, FILL…VIFQ, IFAI…GAAV, and AIAV…AQSI. An a 1,2-diacyl-sn-glycero-3-phospho-(1'-sn-glycerol)-binding site is contributed by Arg-134. 3 helical membrane-spanning segments follow: residues 170–190, 200–220, and 227–247; these read VPTF…ILGL, GDVT…IEGM, and FVGL…GAVL.

The protein belongs to the Lgt family.

The protein localises to the cell membrane. The enzyme catalyses L-cysteinyl-[prolipoprotein] + a 1,2-diacyl-sn-glycero-3-phospho-(1'-sn-glycerol) = an S-1,2-diacyl-sn-glyceryl-L-cysteinyl-[prolipoprotein] + sn-glycerol 1-phosphate + H(+). It functions in the pathway protein modification; lipoprotein biosynthesis (diacylglyceryl transfer). In terms of biological role, catalyzes the transfer of the diacylglyceryl group from phosphatidylglycerol to the sulfhydryl group of the N-terminal cysteine of a prolipoprotein, the first step in the formation of mature lipoproteins. The polypeptide is Phosphatidylglycerol--prolipoprotein diacylglyceryl transferase (Streptococcus thermophilus (strain CNRZ 1066)).